The primary structure comprises 184 residues: Large ribosomal subunit protein uL6 (184 aa).

It belongs to the universal ribosomal protein uL6 family. As to quaternary structure, part of the 50S ribosomal subunit.

Its function is as follows. This protein binds to the 23S rRNA, and is important in its secondary structure. It is located near the subunit interface in the base of the L7/L12 stalk, and near the tRNA binding site of the peptidyltransferase center. The protein is Large ribosomal subunit protein uL6 of Desulfurococcus amylolyticus (strain DSM 18924 / JCM 16383 / VKM B-2413 / 1221n) (Desulfurococcus kamchatkensis).